The following is a 273-amino-acid chain: Tryptophan synthase alpha chain (273 aa).

Catalysis depends on proton acceptor residues Glu-49 and Asp-60.

It belongs to the TrpA family. Tetramer of two alpha and two beta chains.

The enzyme catalyses (1S,2R)-1-C-(indol-3-yl)glycerol 3-phosphate + L-serine = D-glyceraldehyde 3-phosphate + L-tryptophan + H2O. It participates in amino-acid biosynthesis; L-tryptophan biosynthesis; L-tryptophan from chorismate: step 5/5. In terms of biological role, the alpha subunit is responsible for the aldol cleavage of indoleglycerol phosphate to indole and glyceraldehyde 3-phosphate. The polypeptide is Tryptophan synthase alpha chain (Albidiferax ferrireducens (strain ATCC BAA-621 / DSM 15236 / T118) (Rhodoferax ferrireducens)).